A 571-amino-acid chain; its full sequence is Apolipoprotein N-acyltransferase (571 aa).

Transmembrane regions (helical) follow at residues 13 to 33 (VVLWLSGPPFAIGPLVFIALV), 51 to 68 (LYAASLAYWLLSLQGLRY), 72 to 92 (LMFLPWIALSGYLAIYPVLFI), 118 to 138 (LVAAVVWVGLEWIRNYFFTGI), 152 to 172 (MLIQIADLGGTYAVSFVIVCV), and 199 to 219 (LVTAGGLLIATMVYGAMSMNA). Residues 234–527 (NELTVYEQDI…SDVIYAQPRR (294 aa)) enclose the CN hydrolase domain. E275 serves as the catalytic Proton acceptor. Residue K380 is part of the active site. The Nucleophile role is filled by C430. The chain crosses the membrane as a helical span at residues 542 to 562 (AGLMGAATLCGLAWMTFEWLM).

It belongs to the CN hydrolase family. Apolipoprotein N-acyltransferase subfamily.

It localises to the cell inner membrane. The enzyme catalyses N-terminal S-1,2-diacyl-sn-glyceryl-L-cysteinyl-[lipoprotein] + a glycerophospholipid = N-acyl-S-1,2-diacyl-sn-glyceryl-L-cysteinyl-[lipoprotein] + a 2-acyl-sn-glycero-3-phospholipid + H(+). It participates in protein modification; lipoprotein biosynthesis (N-acyl transfer). Catalyzes the phospholipid dependent N-acylation of the N-terminal cysteine of apolipoprotein, the last step in lipoprotein maturation. The chain is Apolipoprotein N-acyltransferase from Rhodopirellula baltica (strain DSM 10527 / NCIMB 13988 / SH1).